The sequence spans 362 residues: Nicotinate-nucleotide--dimethylbenzimidazole phosphoribosyltransferase (362 aa).

Catalysis depends on E321, which acts as the Proton acceptor.

The protein belongs to the CobT family.

The enzyme catalyses 5,6-dimethylbenzimidazole + nicotinate beta-D-ribonucleotide = alpha-ribazole 5'-phosphate + nicotinate + H(+). It functions in the pathway nucleoside biosynthesis; alpha-ribazole biosynthesis; alpha-ribazole from 5,6-dimethylbenzimidazole: step 1/2. In terms of biological role, catalyzes the synthesis of alpha-ribazole-5'-phosphate from nicotinate mononucleotide (NAMN) and 5,6-dimethylbenzimidazole (DMB). In Clostridium tetani (strain Massachusetts / E88), this protein is Nicotinate-nucleotide--dimethylbenzimidazole phosphoribosyltransferase.